The primary structure comprises 813 residues: Immunoglobulin superfamily DCC subclass member 3 (813 aa).

Positions 1 to 21 (MAEPRTASPRRLPALRRPGFL) are disordered. Residues 1-47 (MAEPRTASPRRLPALRRPGFLPPLLPPPPPPLLLLLLLLPLPAPSLG) form the signal peptide. A compositionally biased stretch (low complexity) spans 9–19 (PRRLPALRRPG). Ig-like C2-type domains follow at residues 49–151 (GHSA…ATMS), 151–232 (SDFH…VRVS), 250–333 (PTIL…RTAQ), and 341–428 (PAEF…ARLT). Cystine bridges form between cysteine 75–cysteine 129 and cysteine 172–cysteine 221. The N-linked (GlcNAc...) asparagine glycan is linked to asparagine 105. A glycan (N-linked (GlcNAc...) asparagine) is linked at asparagine 258. Disulfide bonds link cysteine 271/cysteine 319 and cysteine 363/cysteine 412. Residues asparagine 393 and asparagine 394 are each glycosylated (N-linked (GlcNAc...) asparagine). Fibronectin type-III domains lie at 438–532 (PPRN…TLGE) and 535–630 (VPPP…ASER). 3 N-linked (GlcNAc...) asparagine glycosylation sites follow: asparagine 592, asparagine 616, and asparagine 646. Residues 653-673 (IVIGIHIGVTCIIFCVLFLLF) form a helical membrane-spanning segment. 2 disordered regions span residues 689–724 (LSPPQGPRSQRDPGILALNGLSRGEGGQLSRDEKPV) and 775–813 (TTEATSPCAGPGPVPAPQDIGPVPLSEGQTQPPAVAAPQ).

This sequence belongs to the immunoglobulin superfamily. DCC family. In terms of tissue distribution, detected in cerebellum, kidney, heart, lung, skeletal muscle and spleen.

It localises to the membrane. This Mus musculus (Mouse) protein is Immunoglobulin superfamily DCC subclass member 3 (Igdcc3).